Consider the following 237-residue polypeptide: Ribosomal RNA small subunit methyltransferase G (237 aa).

S-adenosyl-L-methionine-binding positions include Gly76, Phe81, 128-129 (VE), and Arg147.

The protein belongs to the methyltransferase superfamily. RNA methyltransferase RsmG family.

Its subcellular location is the cytoplasm. In terms of biological role, specifically methylates the N7 position of a guanine in 16S rRNA. The chain is Ribosomal RNA small subunit methyltransferase G from Prochlorococcus marinus (strain AS9601).